The following is a 1015-amino-acid chain: DNA polymerase catalytic subunit (1015 aa).

It belongs to the DNA polymerase type-B family. As to quaternary structure, forms a complex with the major DNA-binding protein BALF2, the DNA polymerase processivity factor BMRF1, and the alkaline exonuclease BGLF5. Interacts with the putative helicase-primase complex composed of BBLF4, BSLF1 and BBLF2/3 proteins; these interactions may coordinate leading and lagging strand DNA synthesis at the replication fork.

Its subcellular location is the host nucleus. It catalyses the reaction DNA(n) + a 2'-deoxyribonucleoside 5'-triphosphate = DNA(n+1) + diphosphate. Its function is as follows. Replicates viral genomic DNA in the late phase of lytic infection, producing long concatemeric DNA. The replication complex is composed of six viral proteins: the DNA polymerase, processivity factor, primase, primase-associated factor, helicase, and ssDNA-binding protein. The protein is DNA polymerase catalytic subunit of Homo sapiens (Human).